The chain runs to 224 residues: Urease accessory protein UreF (224 aa).

The protein belongs to the UreF family. In terms of assembly, ureD, UreF and UreG form a complex that acts as a GTP-hydrolysis-dependent molecular chaperone, activating the urease apoprotein by helping to assemble the nickel containing metallocenter of UreC. The UreE protein probably delivers the nickel.

The protein resides in the cytoplasm. Required for maturation of urease via the functional incorporation of the urease nickel metallocenter. This is Urease accessory protein UreF from Enterobacter sp. (strain 638).